Consider the following 295-residue polypeptide: Indole-3-glycerol phosphate synthase (295 aa).

This sequence belongs to the TrpC family.

It carries out the reaction 1-(2-carboxyphenylamino)-1-deoxy-D-ribulose 5-phosphate + H(+) = (1S,2R)-1-C-(indol-3-yl)glycerol 3-phosphate + CO2 + H2O. It participates in amino-acid biosynthesis; L-tryptophan biosynthesis; L-tryptophan from chorismate: step 4/5. The polypeptide is Indole-3-glycerol phosphate synthase (Prochlorococcus marinus (strain MIT 9211)).